A 252-amino-acid polypeptide reads, in one-letter code: Methylthioribulose-1-phosphate dehydratase (252 aa).

Cysteine 105 is a substrate binding site. Zn(2+)-binding residues include histidine 123 and histidine 125. The active-site Proton donor/acceptor is the glutamate 151. Residue histidine 208 participates in Zn(2+) binding.

Belongs to the aldolase class II family. MtnB subfamily. It depends on Zn(2+) as a cofactor.

The protein localises to the cytoplasm. The catalysed reaction is 5-(methylsulfanyl)-D-ribulose 1-phosphate = 5-methylsulfanyl-2,3-dioxopentyl phosphate + H2O. The protein operates within amino-acid biosynthesis; L-methionine biosynthesis via salvage pathway; L-methionine from S-methyl-5-thio-alpha-D-ribose 1-phosphate: step 2/6. In terms of biological role, catalyzes the dehydration of methylthioribulose-1-phosphate (MTRu-1-P) into 2,3-diketo-5-methylthiopentyl-1-phosphate (DK-MTP-1-P). In Sclerotinia sclerotiorum (strain ATCC 18683 / 1980 / Ss-1) (White mold), this protein is Methylthioribulose-1-phosphate dehydratase.